The primary structure comprises 297 residues: Calponin-1 (297 aa).

Positions 28 to 131 (HQREQELREW…STLLALASMA (104 aa)) constitute a Calponin-homology (CH) domain. 3 Calponin-like repeats span residues 164 to 189 (IGLQ…RHLY), 204 to 229 (ISLQ…RQIF), and 243 to 268 (VSLQ…RQVY). Thr-170 is subject to Phosphothreonine; by ROCK2. Position 175 is a phosphoserine; by ROCK2 (Ser-175). Residues Thr-180 and Thr-184 each carry the phosphothreonine; by ROCK2 modification. The residue at position 259 (Thr-259) is a Phosphothreonine; by ROCK2.

It belongs to the calponin family. As to quaternary structure, part of cGMP kinase signaling complex at least composed of ACTA2/alpha-actin, CNN1/calponin H1, PLN/phospholamban, PRKG1 and ITPR1. As to expression, smooth muscle, and tissues containing significant amounts of smooth muscle.

Thin filament-associated protein that is implicated in the regulation and modulation of smooth muscle contraction. It is capable of binding to actin, calmodulin and tropomyosin. The interaction of calponin with actin inhibits the actomyosin Mg-ATPase activity. In Homo sapiens (Human), this protein is Calponin-1 (CNN1).